The following is a 595-amino-acid chain: 2-succinyl-5-enolpyruvyl-6-hydroxy-3-cyclohexene-1-carboxylate synthase (595 aa).

The protein belongs to the TPP enzyme family. MenD subfamily. In terms of assembly, homodimer. Requires Mg(2+) as cofactor. The cofactor is Mn(2+). It depends on thiamine diphosphate as a cofactor.

It carries out the reaction isochorismate + 2-oxoglutarate + H(+) = 5-enolpyruvoyl-6-hydroxy-2-succinyl-cyclohex-3-ene-1-carboxylate + CO2. The protein operates within quinol/quinone metabolism; 1,4-dihydroxy-2-naphthoate biosynthesis; 1,4-dihydroxy-2-naphthoate from chorismate: step 2/7. It participates in cofactor biosynthesis; phylloquinone biosynthesis. Functionally, catalyzes the thiamine diphosphate-dependent decarboxylation of 2-oxoglutarate and the subsequent addition of the resulting succinic semialdehyde-thiamine pyrophosphate anion to isochorismate to yield 2-succinyl-5-enolpyruvyl-6-hydroxy-3-cyclohexene-1-carboxylate (SEPHCHC). This chain is 2-succinyl-5-enolpyruvyl-6-hydroxy-3-cyclohexene-1-carboxylate synthase, found in Synechocystis sp. (strain ATCC 27184 / PCC 6803 / Kazusa).